The primary structure comprises 756 residues: uncharacterized protein (756 aa).

This is an uncharacterized protein from Mycoplasma genitalium (strain ATCC 33530 / DSM 19775 / NCTC 10195 / G37) (Mycoplasmoides genitalium).